The following is a 99-amino-acid chain: Large ribosomal subunit protein uL23 (99 aa).

The protein belongs to the universal ribosomal protein uL23 family. As to quaternary structure, part of the 50S ribosomal subunit. Contacts protein L29, and trigger factor when it is bound to the ribosome.

In terms of biological role, one of the early assembly proteins it binds 23S rRNA. One of the proteins that surrounds the polypeptide exit tunnel on the outside of the ribosome. Forms the main docking site for trigger factor binding to the ribosome. This chain is Large ribosomal subunit protein uL23, found in Lachnospira eligens (strain ATCC 27750 / DSM 3376 / VPI C15-48 / C15-B4) (Eubacterium eligens).